Here is a 206-residue protein sequence, read N- to C-terminus: FMN-dependent NADH:quinone oxidoreductase 1 (206 aa).

FMN-binding positions include Ser-10 and 16–18 (SLS).

It belongs to the azoreductase type 1 family. In terms of assembly, homodimer. It depends on FMN as a cofactor.

It catalyses the reaction 2 a quinone + NADH + H(+) = 2 a 1,4-benzosemiquinone + NAD(+). The catalysed reaction is N,N-dimethyl-1,4-phenylenediamine + anthranilate + 2 NAD(+) = 2-(4-dimethylaminophenyl)diazenylbenzoate + 2 NADH + 2 H(+). In terms of biological role, quinone reductase that provides resistance to thiol-specific stress caused by electrophilic quinones. Functionally, also exhibits azoreductase activity. Catalyzes the reductive cleavage of the azo bond in aromatic azo compounds to the corresponding amines. The polypeptide is FMN-dependent NADH:quinone oxidoreductase 1 (Burkholderia lata (strain ATCC 17760 / DSM 23089 / LMG 22485 / NCIMB 9086 / R18194 / 383)).